Reading from the N-terminus, the 219-residue chain is Interleukin-6 (219 aa).

Positions 1–20 (MNSSTRYLSLLSALVVLVKG) are cleaved as a signal peptide. Cysteine 103 and cysteine 111 are disulfide-bonded.

Belongs to the IL-6 superfamily. In terms of assembly, component of a hexamer of two molecules each of IL6, IL6R and IL6ST; first binds to IL6R to associate with the signaling subunit IL6ST. As to expression, expressed in spleen, gill and gastrointestinal tract, ovary and brain. Highest expression in ovary.

It is found in the secreted. Cytokine with a wide variety of biological functions in immunity, tissue regeneration, and metabolism. Binds to IL6R, then the complex associates to the signaling subunit IL6ST/gp130 to trigger the intracellular IL6-signaling pathway. The interaction with the membrane-bound IL6R and IL6ST stimulates 'classic signaling', whereas the binding of IL6 and soluble IL6R to IL6ST stimulates 'trans-signaling'. Alternatively, 'cluster signaling' occurs when membrane-bound IL6:IL6R complexes on transmitter cells activate IL6ST receptors on neighboring receiver cells. The sequence is that of Interleukin-6 (il6) from Oncorhynchus mykiss (Rainbow trout).